The chain runs to 113 residues: UPF0482 protein KPK_2871 (113 aa).

Residues 1 to 28 (MNMTLNKRWCLTAILALSAVVYTSSSFA) form the signal peptide. The segment at 38-61 (GDSAQSRQQASMEKEQWNDTRSLR) is disordered. Residues 39 to 48 (DSAQSRQQAS) show a composition bias toward polar residues. Residues 49–59 (MEKEQWNDTRS) show a composition bias toward basic and acidic residues.

The protein belongs to the UPF0482 family.

This chain is UPF0482 protein KPK_2871, found in Klebsiella pneumoniae (strain 342).